The primary structure comprises 378 residues: Putative glutamate--cysteine ligase 2 (378 aa).

The protein belongs to the glutamate--cysteine ligase type 2 family. YbdK subfamily.

It carries out the reaction L-cysteine + L-glutamate + ATP = gamma-L-glutamyl-L-cysteine + ADP + phosphate + H(+). ATP-dependent carboxylate-amine ligase which exhibits weak glutamate--cysteine ligase activity. In Salinispora arenicola (strain CNS-205), this protein is Putative glutamate--cysteine ligase 2.